The sequence spans 630 residues: tRNA uridine 5-carboxymethylaminomethyl modification enzyme MnmG (630 aa).

13-18 contributes to the FAD binding site; it reads GGGHAG. 273-287 contributes to the NAD(+) binding site; it reads GPRYCPSIEDKIHRF.

The protein belongs to the MnmG family. As to quaternary structure, homodimer. Heterotetramer of two MnmE and two MnmG subunits. FAD serves as cofactor.

Its subcellular location is the cytoplasm. In terms of biological role, NAD-binding protein involved in the addition of a carboxymethylaminomethyl (cmnm) group at the wobble position (U34) of certain tRNAs, forming tRNA-cmnm(5)s(2)U34. The polypeptide is tRNA uridine 5-carboxymethylaminomethyl modification enzyme MnmG (Pseudomonas putida (strain ATCC 700007 / DSM 6899 / JCM 31910 / BCRC 17059 / LMG 24140 / F1)).